Reading from the N-terminus, the 477-residue chain is MAMKIGTQKFKERVSDGLDNEFMRGAVSSAQERLRARRLEAAKELGNWEEWRSLAEEIRQHVLENLDYYLEQLAENVAKKGGHVFFAQTAEEATGYIRDVVKKKNGKKIVKSKSMVTEEINMNEALESDGCEVVETDLGEYILQIDDHDPPSHIVAPALHKNKEQIRDVFKERIGYRNTEKPEELVMHARAVLRKKFLEADIGITGCNFAIADTGSVSLVTNEGNGRLVTTIPKTQITVMGMERIVPSFDEFEVLVGMLTRSAVGQRLTSYITALTGPRLPGEADGPEEFHLVIVDNGRSNILGTEFQSVLQCIRCAACINVCPVYRHVGGHSYGSIYSGPIGAVLSPLLGGYDDYKELPYASSLCAACSEACPVKIPLHELLLKHRQRIVEKEGRAPISEKLAMKAFGLGTSAPSLYKMGSKWAPAAMKPFKEDGKITKGPGPLKQWTQIRDFPAPNKSRFRDWFEDRRKEKGEDK.

4Fe-4S ferredoxin-type domains follow at residues 304–334 and 353–382; these read GTEF…GHSY and YDDY…LHEL. Residues cysteine 313, cysteine 316, cysteine 319, cysteine 323, cysteine 366, cysteine 369, and cysteine 373 each coordinate [4Fe-4S] cluster. The disordered stretch occupies residues 433–477; it reads KEDGKITKGPGPLKQWTQIRDFPAPNKSRFRDWFEDRRKEKGEDK. Residues 461-477 are compositionally biased toward basic and acidic residues; that stretch reads RFRDWFEDRRKEKGEDK.

Belongs to the LutB/YkgF family.

Is involved in L-lactate degradation and allows cells to grow with lactate as the sole carbon source. Has probably a role as an electron transporter during oxidation of L-lactate. This is Lactate utilization protein B from Bacillus licheniformis (strain ATCC 14580 / DSM 13 / JCM 2505 / CCUG 7422 / NBRC 12200 / NCIMB 9375 / NCTC 10341 / NRRL NRS-1264 / Gibson 46).